Here is a 252-residue protein sequence, read N- to C-terminus: 2-succinyl-6-hydroxy-2,4-cyclohexadiene-1-carboxylate synthase (252 aa).

The protein belongs to the AB hydrolase superfamily. MenH family. In terms of assembly, monomer.

The enzyme catalyses 5-enolpyruvoyl-6-hydroxy-2-succinyl-cyclohex-3-ene-1-carboxylate = (1R,6R)-6-hydroxy-2-succinyl-cyclohexa-2,4-diene-1-carboxylate + pyruvate. It participates in quinol/quinone metabolism; 1,4-dihydroxy-2-naphthoate biosynthesis; 1,4-dihydroxy-2-naphthoate from chorismate: step 3/7. Its pathway is quinol/quinone metabolism; menaquinone biosynthesis. In terms of biological role, catalyzes a proton abstraction reaction that results in 2,5-elimination of pyruvate from 2-succinyl-5-enolpyruvyl-6-hydroxy-3-cyclohexene-1-carboxylate (SEPHCHC) and the formation of 2-succinyl-6-hydroxy-2,4-cyclohexadiene-1-carboxylate (SHCHC). This is 2-succinyl-6-hydroxy-2,4-cyclohexadiene-1-carboxylate synthase from Escherichia coli (strain SMS-3-5 / SECEC).